A 91-amino-acid chain; its full sequence is Small ribosomal subunit protein bS20 (91 aa).

Residues 1–26 form a disordered region; it reads MANLKSSKKDIRRTARRKERNGEDRT.

The protein belongs to the bacterial ribosomal protein bS20 family.

Functionally, binds directly to 16S ribosomal RNA. In Leptospira biflexa serovar Patoc (strain Patoc 1 / Ames), this protein is Small ribosomal subunit protein bS20.